The sequence spans 299 residues: Oxygen-dependent coproporphyrinogen-III oxidase (299 aa).

A substrate-binding site is contributed by Ser-92. A divalent metal cation contacts are provided by His-96 and His-106. His-106 serves as the catalytic Proton donor. 108–110 (NVR) is a substrate binding site. A divalent metal cation is bound by residues His-145 and His-175. Residues 240–275 (YVEFNLVWDRGTLFGLQTGGRTESILMSMPPLVRWE) form an important for dimerization region. 258-260 (GGR) is a substrate binding site.

The protein belongs to the aerobic coproporphyrinogen-III oxidase family. In terms of assembly, homodimer. Requires a divalent metal cation as cofactor.

Its subcellular location is the cytoplasm. It carries out the reaction coproporphyrinogen III + O2 + 2 H(+) = protoporphyrinogen IX + 2 CO2 + 2 H2O. Its pathway is porphyrin-containing compound metabolism; protoporphyrin-IX biosynthesis; protoporphyrinogen-IX from coproporphyrinogen-III (O2 route): step 1/1. In terms of biological role, involved in the heme biosynthesis. Catalyzes the aerobic oxidative decarboxylation of propionate groups of rings A and B of coproporphyrinogen-III to yield the vinyl groups in protoporphyrinogen-IX. This is Oxygen-dependent coproporphyrinogen-III oxidase from Salmonella newport (strain SL254).